The following is a 108-amino-acid chain: DNA-binding protein HBbu (108 aa).

It belongs to the bacterial histone-like protein family.

Its function is as follows. Histone-like DNA-binding protein which is capable of wrapping DNA to stabilize it, and thus to prevent its denaturation under extreme environmental conditions. This chain is DNA-binding protein HBbu (hbb), found in Borrelia turicatae.